Consider the following 901-residue polypeptide: HTH-type transcriptional regulator MalT (901 aa).

An ATP-binding site is contributed by 39 to 46; sequence SPAGYGKT. The HTH luxR-type domain occupies 829-894; it reads ELIRTSPLTQ…DAVQHAQQLL (66 aa). Positions 853-872 form a DNA-binding region, H-T-H motif; that stretch reads NEQIAGELAVAATTIKTHIR.

This sequence belongs to the MalT family. Monomer in solution. Oligomerizes to an active state in the presence of the positive effectors ATP and maltotriose.

With respect to regulation, activated by ATP and maltotriose, which are both required for DNA binding. Its function is as follows. Positively regulates the transcription of the maltose regulon whose gene products are responsible for uptake and catabolism of malto-oligosaccharides. Specifically binds to the promoter region of its target genes, recognizing a short DNA motif called the MalT box. This chain is HTH-type transcriptional regulator MalT, found in Enterobacter sp. (strain 638).